We begin with the raw amino-acid sequence, 538 residues long: RNA-binding protein RO60 (538 aa).

Met-1 carries the N-acetylmethionine modification. Phosphoserine is present on residues Ser-4 and Ser-19. Positions 16–369 constitute a TROVE domain; it reads IANSQDGYVW…TFKTVEPTGK (354 aa). Residues 120 to 284 are RNA-binding; the sequence is RIPTHLFTFI…EMPLTALLRN (165 aa). Lys-224 and Lys-359 each carry N6-acetyllysine. The VWFA-like domain stretch occupies residues 361–538; that stretch reads FKTVEPTGKR…VIRNFTLDMI (178 aa). A divalent metal cation-binding residues include Ser-378, Ser-380, and Thr-445.

It belongs to the Ro 60 kDa family. In terms of assembly, identified in a IGF2BP1-dependent mRNP granule complex containing untranslated mRNAs. Found in a complex with PUF60 and Y5 RNA. Interacts with RAB11FIP5.

The protein localises to the cytoplasm. Its function is as follows. RNA-binding protein that binds to misfolded non-coding RNAs, pre-5S rRNA, and several small cytoplasmic RNA molecules known as Y RNAs. Binds to endogenous Alu retroelements which are induced by type I interferon and stimulate porinflammatory cytokine secretion. Regulates the expression of Alu retroelements as well as inflammatory genes. May play roles in cilia formation and/or maintenance. The protein is RNA-binding protein RO60 of Homo sapiens (Human).